Here is a 173-residue protein sequence, read N- to C-terminus: Alpha-crystallin A chain (173 aa).

Position 1 is an N-acetylmethionine (Met1). The segment at 1–63 is required for complex formation with BFSP1 and BFSP2; it reads MDITIQHPWF…RTVLESGISE (63 aa). Gln6 carries the post-translational modification Deamidated glutamine; partial. Ser45 carries the phosphoserine modification. Gln50 bears the Deamidated glutamine; partial mark. One can recognise a sHSP domain in the interval 52-164; sequence LFRTVLESGI…SDRSIPVSRE (113 aa). N6-acetyllysine occurs at positions 70 and 99. Zn(2+)-binding residues include His100, Glu102, and His107. At Ser122 the chain carries Phosphoserine. At Asn123 the chain carries Deamidated asparagine; partial. The span at 146-167 shows a compositional bias: basic and acidic residues; it reads IHSDMDASHSDRSIPVSREEKP. Residues 146 to 173 are disordered; it reads IHSDMDASHSDRSIPVSREEKPTLAPSS. His154 contacts Zn(2+). Ser162 carries an O-linked (GlcNAc) serine glycan.

It belongs to the small heat shock protein (HSP20) family. As to quaternary structure, heteromer composed of three CRYAA and one CRYAB subunits. Inter-subunit bridging via zinc ions enhances stability, which is crucial as there is no protein turn over in the lens. Can also form homodimers and homotetramers (dimers of dimers) which serve as the building blocks of homooligomers. Within homooligomers, the zinc-binding motif is created from residues of 3 different molecules. His-100 and Glu-102 from one molecule are ligands of the zinc ion, and His-107 and His-154 residues from additional molecules complete the site with tetrahedral coordination geometry. Part of a complex required for lens intermediate filament formation composed of BFSP1, BFSP2 and CRYAA. Acetylation at Lys-70 may increase chaperone activity. In terms of processing, undergoes age-dependent proteolytical cleavage at the C-terminus.

The protein resides in the cytoplasm. It localises to the nucleus. Functionally, contributes to the transparency and refractive index of the lens. Acts as a chaperone, preventing aggregation of various proteins under a wide range of stress conditions. Required for the correct formation of lens intermediate filaments as part of a complex composed of BFSP1, BFSP2 and CRYAA. This chain is Alpha-crystallin A chain (CRYAA), found in Osphranter rufus (Red kangaroo).